We begin with the raw amino-acid sequence, 588 residues long: Calicin (588 aa).

The BTB domain maps to 12–124; that stretch reads SFVLQNLNRQ…RLRVHCNDFL (113 aa). Positions 133 to 235 constitute a BACK domain; that stretch reads CLRYLFLAEL…NAVSNKTLVF (103 aa). Phosphoserine is present on Ser-149. Kelch repeat units lie at residues 280-327, 328-375, 377-423, 425-475, 476-525, and 526-580; these read SVVI…SAGR, YIYI…TCGG, VYSV…TKGD, HLYI…SFQQ, DNIL…IGDS, and KVFV…LAKL.

Interacts with CYLC1; the interaction may be relevant for proper acrosome attachment to the nuclear envelope. Expressed in testis, in spermatozoa (at protein level).

It is found in the cytoplasm. The protein localises to the cytoskeleton. The protein resides in the perinuclear theca. Its subcellular location is the calyx. Its function is as follows. Required for both nuclear and acrosomal shaping during spermiogenesis. The chain is Calicin (CCIN) from Homo sapiens (Human).